The following is a 251-amino-acid chain: uncharacterized protein (251 aa).

The Response regulatory domain occupies 3 to 118 (KVVICDDERI…QLEHILDILV (116 aa)). Asp55 is subject to 4-aspartylphosphate. The HTH araC/xylS-type domain maps to 152–249 (NQILSQIKQH…HMSPSDYNKL (98 aa)). DNA-binding regions (H-T-H motif) lie at residues 169–190 (LDLI…KEHV) and 216–239 (HYEI…KKYL).

Post-translationally, phosphorylated by SE_0166.

The protein localises to the cytoplasm. Functionally, probable member of the two-component regulatory system SE_0166/SE_0165. This is an uncharacterized protein from Staphylococcus epidermidis (strain ATCC 12228 / FDA PCI 1200).